Here is a 168-residue protein sequence, read N- to C-terminus: G/U mismatch-specific DNA glycosylase (168 aa).

Belongs to the uracil-DNA glycosylase (UDG) superfamily. TDG/mug family. Binds DNA as a monomer.

Its subcellular location is the cytoplasm. The catalysed reaction is Specifically hydrolyzes mismatched double-stranded DNA and polynucleotides, releasing free uracil.. Its function is as follows. Excises ethenocytosine and uracil, which can arise by alkylation or deamination of cytosine, respectively, from the corresponding mispairs with guanine in ds-DNA. It is capable of hydrolyzing the carbon-nitrogen bond between the sugar-phosphate backbone of the DNA and the mispaired base. The complementary strand guanine functions in substrate recognition. Required for DNA damage lesion repair in stationary-phase cells. The sequence is that of G/U mismatch-specific DNA glycosylase from Salmonella paratyphi B (strain ATCC BAA-1250 / SPB7).